Consider the following 319-residue polypeptide: Aspartate carbamoyltransferase catalytic subunit (319 aa).

The carbamoyl phosphate site is built by arginine 57 and threonine 58. Residue lysine 85 coordinates L-aspartate. Positions 107, 135, and 138 each coordinate carbamoyl phosphate. The L-aspartate site is built by arginine 168 and arginine 222. Glycine 263 and proline 264 together coordinate carbamoyl phosphate.

Belongs to the aspartate/ornithine carbamoyltransferase superfamily. ATCase family. In terms of assembly, heterododecamer (2C3:3R2) of six catalytic PyrB chains organized as two trimers (C3), and six regulatory PyrI chains organized as three dimers (R2).

It catalyses the reaction carbamoyl phosphate + L-aspartate = N-carbamoyl-L-aspartate + phosphate + H(+). Its pathway is pyrimidine metabolism; UMP biosynthesis via de novo pathway; (S)-dihydroorotate from bicarbonate: step 2/3. Functionally, catalyzes the condensation of carbamoyl phosphate and aspartate to form carbamoyl aspartate and inorganic phosphate, the committed step in the de novo pyrimidine nucleotide biosynthesis pathway. The chain is Aspartate carbamoyltransferase catalytic subunit from Paracoccus denitrificans (strain Pd 1222).